We begin with the raw amino-acid sequence, 1257 residues long: MMCEVMPTINEDTPMSQRGSQSSGSDSDSHFEQLMVNMLDERDRLLDTLRETQESLSLAQQRLQDVIYDRDSLQRQLNSALPQDIESLTGGLAGSKGADPPEFAALTKELNACREQLLEKEEEISELKAERNNTRLLLEHLECLVSRHERSLRMTVVKRQAQSPSGVSSEVEVLKALKSLFEHHKALDEKVRERLRVSLERVSALEEELAAANQEIVALREQNVHIQRKMASSEGSTESEHLEGMEPGQKVHEKRLSNGSIDSTDETSQIVELQELLEKQNYEMAQMKERLAALSSRVGEVEQEAETARKDLIKTEEMNTKYQRDIREAMAQKEDMEERITTLEKRYLSAQRESTSIHDMNDKLENELANKEAILRQMEEKNRQLQERLELAEQKLQQTMRKAETLPEVEAELAQRIAALTKAEERHGNIEERMRHLEGQLEEKNQELQRARQREKMNEEHNKRLSDTVDRLLTESNERLQLHLKERMAALEEKNVLIQESETFRKNLEESLHDKERLAEEIEKLRSELDQLKMRTGSLIEPTIPRTHLDTSAELRYSVGSLVDSQSDYRTTKVIRRPRRGRMGVRRDEPKVKSLGDHEWNRTQQIGVLSSHPFESDTEMSDIDDDDRETIFSSMDLLSPSGHSDAQTLAMMLQEQLDAINKEIRLIQEEKESTELRAEEIENRVASVSLEGLNLARVHPGTSITASVTASSLASSSPPSGHSTPKLTPRSPAREMDRMGVMTLPSDLRKHRRKIAVVEEDGREDKATIKCETSPPPTPRALRMTHTLPSSYHNDARSSLSVSLEPESLGLGSANSSQDSLHKAPKKKGIKSSIGRLFGKKEKARLGQLRGFMETEAAAQESLGLGKLGTQAEKDRRLKKKHELLEEARRKGLPFAQWDGPTVVAWLELWLGMPAWYVAACRANVKSGAIMSALSDTEIQREIGISNPLHRLKLRLAIQEMVSLTSPSAPPTSRTPSGNVWVTHEEMENLAAPAKTKESEEGSWAQCPVFLQTLAYGDMNHEWIGNEWLPSLGLPQYRSYFMECLVDARMLDHLTKKDLRVHLKMVDSFHRTSLQYGIMCLKRLNYDRKELERRREASQHEIKDVLVWSNDRVIRWIQAIGLREYANNILESGVHGSLIALDENFDYSSLALLLQIPTQNTQARQILEREYNNLLALGTERRLDESDDKNFRRGSTWRRQFPPREVHGISMMPGSSETLPAGFRLTTTSGQSRKMTTDVASSRLQRLDNSTVRTYSC.

3 disordered regions span residues 1 to 29, 231 to 265, and 438 to 463; these read MMCEVMPTINEDTPMSQRGSQSSGSDSDS, ASSEGSTESEHLEGMEPGQKVHEKRLSNGSIDSTD, and EGQLEEKNQELQRARQREKMNEEHNK. A compositionally biased stretch (low complexity) spans 16–26; sequence SQRGSQSSGSD. 3 coiled-coil regions span residues 29 to 154, 185 to 541, and 643 to 695; these read SHFE…SLRM, KALD…SLIE, and HSDA…GLNL. Ser-236 is modified (phosphoserine). At Thr-237 the chain carries Phosphothreonine. Positions 238 to 256 are enriched in basic and acidic residues; the sequence is ESEHLEGMEPGQKVHEKRL. Ser-239 is subject to Phosphoserine. Phosphoserine occurs at positions 687 and 689. Composition is skewed to low complexity over residues 709-725 and 798-813; these read TASSLASSSPPSGHSTP and SSLSVSLEPESLGLGS. 2 disordered regions span residues 709–738 and 790–834; these read TASSLASSSPPSGHSTPKLTPRSPAREMDR and SSYH…KSSI. Phosphoserine is present on residues Ser-817 and Ser-820. 3 SAM domains span residues 898-964, 1020-1084, and 1108-1177; these read WDGP…MVSL, NHEW…LKRL, and WSND…LLAL. The stretch at 1081–1107 forms a coiled coil; it reads LKRLNYDRKELERRREASQHEIKDVLV.

Belongs to the liprin family. Liprin-alpha subfamily. As to quaternary structure, forms homodimers and heterodimers with liprins-alpha and liprins-beta. Interacts with the second PTPase domain of PTPRD, PTPRF and PTPRS. Interacts with KIF1A; the interaction decreases in presence of calcium. In terms of tissue distribution, expressed only in brain.

It localises to the cytoplasm. The protein localises to the cell surface. The protein resides in the cell projection. It is found in the dendritic spine. In terms of biological role, alters PTPRF cellular localization and induces PTPRF clustering. May regulate the disassembly of focal adhesions. May localize receptor-like tyrosine phosphatases type 2A at specific sites on the plasma membrane, possibly regulating their interaction with the extracellular environment and their association with substrates. In neuronal cells, is a scaffolding protein in the dendritic spines which acts as immobile postsynaptic post able to recruit KIF1A-driven dense core vesicles to dendritic spines. The chain is Liprin-alpha-2 (PPFIA2) from Homo sapiens (Human).